The sequence spans 932 residues: ER degradation-enhancing alpha-mannosidase-like protein 3 (932 aa).

The first 41 residues, 1–41, serve as a signal peptide directing secretion; that stretch reads MSEAGGRGCGSPVPQRARWRLVAATAAFCLVSATSVWTAGA. Asparagine 118 carries N-linked (GlcNAc...) asparagine glycosylation. Catalysis depends on glutamate 146, which acts as the Proton donor. Asparagine 195 is a glycosylation site (N-linked (GlcNAc...) asparagine). Aspartate 293 is a catalytic residue. Glutamate 387 serves as the catalytic Proton donor. Glutamate 405 is an active-site residue. Threonine 491 contributes to the Ca(2+) binding site. N-linked (GlcNAc...) asparagine glycosylation is found at asparagine 504 and asparagine 511. The region spanning 674–779 is the PA domain; it reads LSKHKETRGF…KEGSIILDAI (106 aa). A compositionally biased stretch (basic and acidic residues) spans 790 to 799; that stretch reads SDKAKDRDPE. The segment at 790 to 908 is disordered; sequence SDKAKDRDPE…PNVSWGKKVQ (119 aa). N-linked (GlcNAc...) asparagine glycans are attached at residues asparagine 810 and asparagine 814. Low complexity predominate over residues 812–825; the sequence is SQNQSGEQISSSSQ. Residues 856 to 890 are compositionally biased toward polar residues; sequence ASISPSEQTSNPTENHETTNLNGECTDLDNQLQEQ. A glycan (N-linked (GlcNAc...) asparagine) is linked at asparagine 900. Residues 929–932 carry the Prevents secretion from ER motif; that stretch reads KDEL.

The protein belongs to the glycosyl hydrolase 47 family. The cofactor is Ca(2+).

Its subcellular location is the endoplasmic reticulum lumen. The catalysed reaction is N(4)-(alpha-D-Man-(1-&gt;2)-alpha-D-Man-(1-&gt;2)-alpha-D-Man-(1-&gt;3)-[alpha-D-Man-(1-&gt;2)-alpha-D-Man-(1-&gt;3)-[alpha-D-Man-(1-&gt;2)-alpha-D-Man-(1-&gt;6)]-alpha-D-Man-(1-&gt;6)]-beta-D-Man-(1-&gt;4)-beta-D-GlcNAc-(1-&gt;4)-beta-D-GlcNAc)-L-asparaginyl-[protein] (N-glucan mannose isomer 9A1,2,3B1,2,3) + 4 H2O = N(4)-(alpha-D-Man-(1-&gt;3)-[alpha-D-Man-(1-&gt;3)-[alpha-D-Man-(1-&gt;6)]-alpha-D-Man-(1-&gt;6)]-beta-D-Man-(1-&gt;4)-beta-D-GlcNAc-(1-&gt;4)-beta-D-GlcNAc)-L-asparaginyl-[protein] (N-glucan mannose isomer 5A1,2) + 4 beta-D-mannose. It catalyses the reaction N(4)-(alpha-D-Man-(1-&gt;2)-alpha-D-Man-(1-&gt;2)-alpha-D-Man-(1-&gt;3)-[alpha-D-Man-(1-&gt;3)-[alpha-D-Man-(1-&gt;2)-alpha-D-Man-(1-&gt;6)]-alpha-D-Man-(1-&gt;6)]-beta-D-Man-(1-&gt;4)-beta-D-GlcNAc-(1-&gt;4)-beta-D-GlcNAc)-L-asparaginyl-[protein] (N-glucan mannose isomer 8A1,2,3B1,3) + 3 H2O = N(4)-(alpha-D-Man-(1-&gt;3)-[alpha-D-Man-(1-&gt;3)-[alpha-D-Man-(1-&gt;6)]-alpha-D-Man-(1-&gt;6)]-beta-D-Man-(1-&gt;4)-beta-D-GlcNAc-(1-&gt;4)-beta-D-GlcNAc)-L-asparaginyl-[protein] (N-glucan mannose isomer 5A1,2) + 3 beta-D-mannose. It functions in the pathway protein modification; protein glycosylation. Involved in endoplasmic reticulum-associated degradation (ERAD). Accelerates the glycoprotein ERAD by proteasomes, by catalyzing mannose trimming from Man8GlcNAc2 to Man7GlcNAc2 in the N-glycans. May also participate in mannose trimming from all glycoproteins and not just misfolded ones targeted to ERAD. May have alpha 1,2-mannosidase activity. This chain is ER degradation-enhancing alpha-mannosidase-like protein 3 (EDEM3), found in Homo sapiens (Human).